A 431-amino-acid chain; its full sequence is Serine hydroxymethyltransferase 3 (431 aa).

(6S)-5,6,7,8-tetrahydrofolate contacts are provided by residues leucine 131 and 135–137; that span reads GHL. Lysine 240 carries the post-translational modification N6-(pyridoxal phosphate)lysine.

It belongs to the SHMT family. Homodimer. Pyridoxal 5'-phosphate is required as a cofactor.

It is found in the cytoplasm. The catalysed reaction is (6R)-5,10-methylene-5,6,7,8-tetrahydrofolate + glycine + H2O = (6S)-5,6,7,8-tetrahydrofolate + L-serine. It participates in one-carbon metabolism; tetrahydrofolate interconversion. It functions in the pathway amino-acid biosynthesis; glycine biosynthesis; glycine from L-serine: step 1/1. Catalyzes the reversible interconversion of serine and glycine with tetrahydrofolate (THF) serving as the one-carbon carrier. This reaction serves as the major source of one-carbon groups required for the biosynthesis of purines, thymidylate, methionine, and other important biomolecules. Also exhibits THF-independent aldolase activity toward beta-hydroxyamino acids, producing glycine and aldehydes, via a retro-aldol mechanism. This chain is Serine hydroxymethyltransferase 3, found in Colwellia psychrerythraea (strain 34H / ATCC BAA-681) (Vibrio psychroerythus).